Consider the following 166-residue polypeptide: Probable protein tyrosine phosphatase type IVA A (166 aa).

Positions asparagine 10–arginine 164 constitute a Tyrosine-protein phosphatase domain. The cysteines at positions 52 and 107 are disulfide-linked. Residue aspartate 75 is the Proton donor of the active site. Cysteine 107 acts as the Phosphocysteine intermediate in catalysis. Valine 108 to arginine 113 lines the phosphate pocket. Substrate is bound at residue arginine 113. Residue cysteine 163 is modified to Cysteine methyl ester. Cysteine 163 carries S-farnesyl cysteine lipidation. A propeptide spans arginine 164–methionine 166 (removed in mature form).

Belongs to the protein-tyrosine phosphatase family.

Its subcellular location is the membrane. It carries out the reaction O-phospho-L-tyrosyl-[protein] + H2O = L-tyrosyl-[protein] + phosphate. In Dictyostelium discoideum (Social amoeba), this protein is Probable protein tyrosine phosphatase type IVA A.